We begin with the raw amino-acid sequence, 833 residues long: Enhancer of filamentation 1 (833 aa).

The SH3 domain maps to 3-65 (ARNLMARALY…PGNRVKLLIG (63 aa)). Residues Y91, Y163, Y165, Y176, Y188, Y213, and Y222 each carry the phosphotyrosine modification. The segment at 237-258 (EKEYDFPPPMKQDGKPDTRPEG) is disordered. Basic and acidic residues predominate over residues 248 to 258 (QDGKPDTRPEG). Position 295 is a phosphoserine (S295). Disordered stretches follow at residues 297–316 (SLHH…SDAY), 326–403 (EVPT…RLRL), and 560–623 (PANS…SERS). The segment covering 304–314 (QLGQSGDTQSD) has biased composition (polar residues). Y316 carries the post-translational modification Phosphotyrosine. The segment covering 331-343 (TSEKANPEERDGV) has biased composition (basic and acidic residues). Positions 350–833 (NPADAKGSRD…KRSLLEMATF (484 aa)) are interacts with CTTN. The Caspase cleavage related site motif lies at 359-362 (DVVD). S368 is modified (phosphoserine). Low complexity predominate over residues 368–396 (SFSSTGSTRSNMSTSSTSSKESSLSASPS). Residues 564 to 586 (HLKNGPNSIMNSSEYTHPGSQMQ) show a composition bias toward polar residues. The divergent helix-loop-helix motif stretch occupies residues 709–759 (FYYDQCETHFISLLNAIDALFSCVSSAQPPRIFVAHSKFVILSAHKLVFIG). Residues 709–833 (FYYDQCETHF…KRSLLEMATF (125 aa)) form a required for interaction with PLK1 region. Residue S779 is modified to Phosphoserine. Phosphothreonine is present on T803.

Belongs to the CAS family. Homodimer. Forms heterodimers with BCAR1/p130cas. Forms complexes with PTK2B/RAFTK, adapter protein CRKL and LYN kinase. Part of a complex composed of NEDD9, AURKA and CTTN; within the complex NEDD9 acts as a scaffold protein and is required for complex formation. Part of a ternary complex composed of SMAD3, ITCH/AIP4 and NEDD9/HEF1; within the complex NEDD9/HEF1 interacts (via N-terminus) with ITCH/AIP4 (via WW domains); the complex mediates ubiquitination and proteasomal degradation of NEDD9/HEF1. Interacts with SMAD3; the interaction promotes NEDD9 ubiquitination and proteasomal degradation. Interacts with ID2. Interacts with CTTN (via N-terminus). Interacts with MICAL. Interacts with TXNL4/DIM1. Interacts with BCAR3 (via Ras-GEF domain). Interacts with SH2D3C isoform 1 and isoform 2. Interacts with ECT2. Interacts with PTPN11/SHP-2 (via SH2 domains); the interaction is enhanced when NEDD9/CAS-L is tyrosine phosphorylated. Interacts (via C-terminus) with PLK1 (via polo box domains). Interacts with NKX2-5. Interacts with SMAD3; the interaction is inhibited by oxidation of NEDD9. Interacts with NEDD9/HEF1; interaction is induced by CXCL12 promotion of ABL-mediated phosphorylation of NEDD9/HEF1. Interacts (via SH3 domain) with PTK2/FAK. Interacts with FYN; in the presence of PTK2. Interacts with INPPL1/SHIP2. In terms of processing, polyubiquitinated by ITCH/AIP4, leading to proteasomal degradation. PTK2/FAK1 phosphorylates the protein at the YDYVHL motif (conserved among all cas proteins) following integrin stimulation. The SRC family kinases (FYN, SRC, LCK and CRK) are recruited to the phosphorylated sites and can phosphorylate other tyrosine residues. Ligation of either integrin beta-1 or B-cell antigen receptor on tonsillar B-cells and B-cell lines promotes tyrosine phosphorylation and both integrin and BCR-mediated tyrosine phosphorylation requires an intact actin network. Phosphorylation is required to recruit NEDD9 to T-cell receptor microclusters at the periphery of newly formed immunological synapses. In fibroblasts transformation with oncogene v-ABL results in an increase in tyrosine phosphorylation. Transiently phosphorylated following CD3 cross-linking and this phosphorylated form binds to CRKL and C3G. A mutant lacking the SH3 domain is phosphorylated upon CD3 cross-linking but not upon integrin beta-1 cross-linking. Tyrosine phosphorylation occurs upon stimulation of the G-protein coupled C1a calcitonin receptor. Calcitonin-stimulated tyrosine phosphorylation is mediated by calcium- and protein kinase C-dependent mechanisms and requires the integrity of the actin cytoskeleton. Phosphorylation at Ser-368 induces proteasomal degradation. Phosphorylated by LYN. Phosphorylation at Ser-779 by CSNK1D or CSNK1E, or phosphorylation of Thr-803 by CSNK1E enhances the interaction of NEDD9 with PLK1. As to expression, expressed in splenic lymphocytes (at protein level). Expressed in T-cells (at protein level). Expressed in the thymus. Expressed throughout the brain however particularly abundant in the cortex and hippocampus.

The protein localises to the cytoplasm. It localises to the cell cortex. The protein resides in the nucleus. Its subcellular location is the golgi apparatus. It is found in the cell projection. The protein localises to the lamellipodium. It localises to the cell junction. The protein resides in the focal adhesion. Its subcellular location is the cytoskeleton. It is found in the spindle pole. The protein localises to the cilium. It localises to the cilium basal body. The protein resides in the basolateral cell membrane. Scaffolding protein which plays a central coordinating role for tyrosine-kinase-based signaling related to cell adhesion. As a focal adhesion protein, plays a role in embryonic fibroblast migration. May play an important role in integrin beta-1 or B cell antigen receptor (BCR) mediated signaling in B- and T-cells. Integrin beta-1 stimulation leads to recruitment of various proteins including CRKl and SHPTP2 to the tyrosine phosphorylated form. Promotes adhesion and migration of lymphocytes; as a result required for the correct migration of lymphocytes to the spleen and other secondary lymphoid organs. Plays a role in the organization of T-cell F-actin cortical cytoskeleton and the centralization of T-cell receptor microclusters at the immunological synapse. Negatively regulates cilia outgrowth in polarized cysts. Modulates cilia disassembly via activation of AURKA-mediated phosphorylation of HDAC6 and subsequent deacetylation of alpha-tubulin. Positively regulates RANKL-induced osteoclastogenesis. Required for the maintenance of hippocampal dendritic spines in the dentate gyrus and CA1 regions, thereby involved in spatial learning and memory. The protein is Enhancer of filamentation 1 of Mus musculus (Mouse).